Reading from the N-terminus, the 468-residue chain is GDNF family receptor alpha-1 (468 aa).

The N-terminal stretch at 1–24 (MFLATLYFVLPLLDLLMSAEVSGG) is a signal peptide. 3 consecutive repeat copies span residues 25–113 (DRLD…LQGN), 150–238 (KGNN…YEER), and 239–342 (ERPN…KNAI). Cys36 and Cys42 form a disulfide bridge. Asn59 is a glycosylation site (N-linked (GlcNAc...) asparagine). Cystine bridges form between Cys154–Cys214, Cys161–Cys167, Cys178–Cys192, Cys187–Cys233, Cys216–Cys221, Cys243–Cys313, Cys250–Cys256, Cys267–Cys285, Cys277–Cys337, and Cys315–Cys325. 2 N-linked (GlcNAc...) asparagine glycosylation sites follow: Asn347 and Asn406. Residue Ser430 is the site of GPI-anchor amidated serine attachment. A propeptide spans 431 to 468 (HITTKSMAAPPSCGLSSLPVMVFTALAALLSVSLAETS) (removed in mature form).

The protein belongs to the GDNFR family. Interacts with GDNF ligand and RET: forms a 2:2:2 ternary complex composed of GDNF ligand, GFRA1 and RET receptor. Interacts with SORL1, either alone or in complex with GDNF. Interaction between SORL1 and GFRA1 leads to GFRA1 internalization, but not degradation. As to expression, expressed in the brain, in hippocampal neurons (at protein level). Isoform 1 and isoform 2 are expressed in heart, brain, lung, liver, kidney and testis.

The protein resides in the cell membrane. Its subcellular location is the golgi apparatus. It localises to the trans-Golgi network. The protein localises to the endosome. It is found in the multivesicular body. Coreceptor for GDNF, a neurotrophic factor that enhances survival and morphological differentiation of dopaminergic neurons and increases their high-affinity dopamine uptake. GDNF-binding leads to autophosphorylation and activation of the RET receptor. The protein is GDNF family receptor alpha-1 (Gfra1) of Mus musculus (Mouse).